A 981-amino-acid polypeptide reads, in one-letter code: Helicase-like transcription factor CHR28 (981 aa).

2 disordered regions span residues Met-1–Arg-66 and Lys-112–Glu-194. The span at Ser-46 to Ser-65 shows a compositional bias: polar residues. A compositionally biased stretch (pro residues) spans Phe-119–Pro-128. Over residues His-166–Asn-176 the composition is skewed to polar residues. Over residues Pro-181–Glu-194 the composition is skewed to basic and acidic residues. The region spanning Glu-241 to Asp-526 is the Helicase ATP-binding domain. ATP is bound at residue Asp-254–Thr-261. 2 disordered regions span residues Asp-293–Asn-337 and Val-439–Asp-462. The span at Val-439–Gly-451 shows a compositional bias: basic residues. Residues Cys-679–Arg-718 form an RING-type; degenerate zinc finger. Positions Asn-779–Pro-798 are enriched in polar residues. Residues Asn-779–Asp-808 are disordered. Residues Asn-799 to Asp-808 are compositionally biased toward acidic residues. In terms of domain architecture, Helicase C-terminal spans Asp-804–Lys-976.

This sequence belongs to the SNF2/RAD54 helicase family. RAD16 subfamily. Interacts with SUVR2.

Its subcellular location is the nucleus. Functionally, probable helicase-like transcription factor involved in transcriptional gene silencing. Associates with SUVR2 and contributes to transcriptional gene silencing at RNA-directed DNA methylation (RdDM) target loci but also at RdDM-independent target loci. May be involved in nucleosome positioning to form ordered nucleosome arrays on chromatin. Associates with SUVR2 and functions redundantly with FRG1. Required for the efficient methylation of a broad range of RdDM target loci. The chain is Helicase-like transcription factor CHR28 from Arabidopsis thaliana (Mouse-ear cress).